We begin with the raw amino-acid sequence, 574 residues long: Lipase maturation factor 1 (574 aa).

A disordered region spans residues 1 to 39 (MRPDSLVMAAPEGSLRKRKVGGAEHSPASQPSLARDPAD). Over 1–49 (MRPDSLVMAAPEGSLRKRKVGGAEHSPASQPSLARDPADSPARLHTGTF) the chain is Cytoplasmic. The helical transmembrane segment at 50–72 (WLTRIVLLRALAFIYFVAFLVAF) threads the bilayer. At 73–127 (NQNKALIGDRGLLPCKLYLKNVQEYFQGSTGWAAWTYAPTIMWLLDWSDMNFNLD) the chain is on the lumenal side. The chain crosses the membrane as a helical span at residues 128–151 (LIALLGLGISSFVLVTGCANMILM). Topologically, residues 152–207 (TALWALYMSLVNVGQIWYSFGWESQLLETGFLGIFLSPLWTLSRLPKNTPTSQIVL) are cytoplasmic. Residues 208 to 221 (WGFRWLIFRIMLGA) form a helical membrane-spanning segment. Residues 222 to 292 (GLIKVRGDKC…LGRRMRILHG (71 aa)) are Lumenal-facing. The helical transmembrane segment at 293–321 (VLQILFQVILIISGNLSFLNWLTIVPSLA) threads the bilayer. Topologically, residues 322–367 (CFDDAALGFLFPSGPQGLKKQVLEIQREDTQRVQPKPRDRGCLVRQ) are cytoplasmic. Residues 368–388 (VVNISLGILVAWLSVPVVINL) form a helical membrane-spanning segment. The Lumenal portion of the chain corresponds to 389–574 (LSSRQIMNTS…LPEPPSRHTR (186 aa)).

This sequence belongs to the lipase maturation factor family. Interacts with LPL and SEL1L. As to expression, expressed in all tissues synthesizing lipoprotein lipase (Lpl) and hepatic lipase (Lipc), including adipose tissue, skeletal muscle, heart, and liver. Expressed at higher levels in tissues that express little or no lipase activity such as testis and pancreas suggesting additional functions in these tissues.

It is found in the endoplasmic reticulum membrane. Its function is as follows. Involved in the maturation of specific proteins in the endoplasmic reticulum. Required for maturation and transport of active lipoprotein lipase (LPL) through the secretory pathway. Each LMF1 molecule chaperones 50 or more molecules of LPL. This is Lipase maturation factor 1 (Lmf1) from Mus musculus (Mouse).